We begin with the raw amino-acid sequence, 366 residues long: Nodulation protein NolL (366 aa).

9 helical membrane passes run 27-47 (FVKG…LVIY), 62-82 (IYMF…SGTI), 98-118 (LLIP…AAFF), 140-160 (FLWA…FNLL), 164-184 (ILCA…IVPL), 212-232 (HKSL…LDWG), 253-273 (VLLM…SLFH), 286-306 (LVAV…GAVF), and 324-344 (IVVA…VLWI).

The protein belongs to the acyltransferase 3 family.

It is found in the cell membrane. Its function is as follows. Thought to be an acetyltransferase that modifies the fucose of the nod factor. The sequence is that of Nodulation protein NolL (nolL) from Sinorhizobium fredii (strain NBRC 101917 / NGR234).